We begin with the raw amino-acid sequence, 362 residues long: MKIDTGFYSKTITPTYDSDAIDRLRYYFTVFLLTSSAFFIMAKQYVGQSIQCWAPKQFKGGWEEYAESYCLIENTYYVHMNNSNLPGPAIRENKELKYYQWVPFILFGLAVVIYIPRVIWNALQSLIGINISIVTSNLRKVAKSGFTSENPDIEKKKKEMQCKKKATSRQVDGEFWGSRLTTCILATKFLATILIFISMGFLDYFMGLGPMYGWTITKDILQGRQWQESGSFPRVTFCDFQVRELGYVNNWSLQCVLMVNMFNEKLFIALWWWYALLAILSIFDIFRVLFRFTIHHQISFITRILACTGDSAISATEVGEFNRKVLRIDGINLTHLVYANATIFEAADFVRPMWEQFKENQN.

4 helical membrane-spanning segments follow: residues 27–47 (YFTV…QYVG), 101–121 (WVPF…VIWN), 189–209 (FLAT…MGLG), and 266–286 (LFIA…FDIF).

Belongs to the pannexin family.

The protein resides in the cell membrane. The protein localises to the cell junction. It is found in the gap junction. In terms of biological role, structural component of the gap junctions. The chain is Innexin-17 from Caenorhabditis elegans.